Consider the following 383-residue polypeptide: tRNA-specific 2-thiouridylase MnmA (383 aa).

ATP-binding positions include 29-36 (GMSGGVDS) and Met-55. Positions 115–117 (NPD) are interaction with target base in tRNA. Catalysis depends on Cys-120, which acts as the Nucleophile. Cysteines 120 and 217 form a disulfide. Position 145 (Gly-145) interacts with ATP. An interaction with tRNA region spans residues 167 to 169 (KDQ). Residue Cys-217 is the Cysteine persulfide intermediate of the active site. The interval 329 to 330 (RY) is interaction with tRNA.

This sequence belongs to the MnmA/TRMU family.

It localises to the cytoplasm. The catalysed reaction is S-sulfanyl-L-cysteinyl-[protein] + uridine(34) in tRNA + AH2 + ATP = 2-thiouridine(34) in tRNA + L-cysteinyl-[protein] + A + AMP + diphosphate + H(+). Its function is as follows. Catalyzes the 2-thiolation of uridine at the wobble position (U34) of tRNA, leading to the formation of s(2)U34. This Histophilus somni (strain 129Pt) (Haemophilus somnus) protein is tRNA-specific 2-thiouridylase MnmA.